The chain runs to 365 residues: Flagellar P-ring protein (365 aa).

Residues 1-19 form the signal peptide; that stretch reads MIKFLSTFMLLLVTTVVQA.

This sequence belongs to the FlgI family. In terms of assembly, the basal body constitutes a major portion of the flagellar organelle and consists of four rings (L,P,S, and M) mounted on a central rod.

The protein localises to the periplasm. It localises to the bacterial flagellum basal body. In terms of biological role, assembles around the rod to form the L-ring and probably protects the motor/basal body from shearing forces during rotation. The polypeptide is Flagellar P-ring protein (Escherichia fergusonii (strain ATCC 35469 / DSM 13698 / CCUG 18766 / IAM 14443 / JCM 21226 / LMG 7866 / NBRC 102419 / NCTC 12128 / CDC 0568-73)).